A 131-amino-acid chain; its full sequence is MIVCAEMDEQWGYVGAKSRQRWLFYAYDSLRKTVVAHVFGERTMATLGRLMSLLSPFDVVIWMTDGWPLYESRLKGKLHVISKRYTQRIERHNLNLRQHLARLGRKSLSFSKSVELHDKVIGHYLNIKHYQ.

Belongs to the transposase 27 family.

In terms of biological role, absolutely required for transposition of IS1. The chain is Insertion element IS1 protein InsB (insB) from Shigella sonnei.